The primary structure comprises 87 residues: Small ribosomal subunit protein bS20 (87 aa).

The interval 1–22 is disordered; sequence MANHKSALKRHKQSLKRAARNR.

It belongs to the bacterial ribosomal protein bS20 family.

In terms of biological role, binds directly to 16S ribosomal RNA. This Nitratidesulfovibrio vulgaris (strain DP4) (Desulfovibrio vulgaris) protein is Small ribosomal subunit protein bS20.